We begin with the raw amino-acid sequence, 222 residues long: Embryonic stem cell-related gene protein (222 aa).

As to expression, expressed only in fetal ovary and in undifferentiated ES cells.

It is found in the nucleus. The polypeptide is Embryonic stem cell-related gene protein (ESRG) (Homo sapiens (Human)).